The following is a 268-amino-acid chain: Octanoyltransferase (268 aa).

The region spanning 47-243 (PETPDQVWLV…ALCEVLAAHE (197 aa)) is the BPL/LPL catalytic domain. Substrate contacts are provided by residues 87–94 (RGGQITYH), 159–161 (ALG), and 172–174 (GVS). Cysteine 190 serves as the catalytic Acyl-thioester intermediate.

This sequence belongs to the LipB family.

The protein resides in the cytoplasm. It catalyses the reaction octanoyl-[ACP] + L-lysyl-[protein] = N(6)-octanoyl-L-lysyl-[protein] + holo-[ACP] + H(+). It participates in protein modification; protein lipoylation via endogenous pathway; protein N(6)-(lipoyl)lysine from octanoyl-[acyl-carrier-protein]: step 1/2. In terms of biological role, catalyzes the transfer of endogenously produced octanoic acid from octanoyl-acyl-carrier-protein onto the lipoyl domains of lipoate-dependent enzymes. Lipoyl-ACP can also act as a substrate although octanoyl-ACP is likely to be the physiological substrate. The polypeptide is Octanoyltransferase (Cupriavidus necator (strain ATCC 17699 / DSM 428 / KCTC 22496 / NCIMB 10442 / H16 / Stanier 337) (Ralstonia eutropha)).